The chain runs to 188 residues: Large ribosomal subunit protein eL18 (188 aa).

Residue lysine 119 forms a Glycyl lysine isopeptide (Lys-Gly) (interchain with G-Cter in SUMO2) linkage. Serine 130 is modified (phosphoserine). The segment at 150–188 (RHFGKAPRTPHSHTKPYVRSKGRKFERARGRWASRGYKN) is disordered. 2 stretches are compositionally biased toward basic residues: residues 151–171 (HFGK…RSKG) and 179–188 (GRWASRGYKN). Residue threonine 158 is modified to Phosphothreonine. A Glycyl lysine isopeptide (Lys-Gly) (interchain with G-Cter in SUMO2) cross-link involves residue lysine 164.

The protein belongs to the eukaryotic ribosomal protein eL18 family. As to quaternary structure, component of the large ribosomal subunit.

The protein localises to the cytoplasm. It localises to the cytosol. Its subcellular location is the rough endoplasmic reticulum. In terms of biological role, component of the large ribosomal subunit. The ribosome is a large ribonucleoprotein complex responsible for the synthesis of proteins in the cell. In Oryctolagus cuniculus (Rabbit), this protein is Large ribosomal subunit protein eL18 (RPL18).